Consider the following 187-residue polypeptide: Ribosome maturation factor RimM (187 aa).

The region spanning 96 to 169 (EDEFFYADLE…KLVIDPTAAG (74 aa)) is the PRC barrel domain.

The protein belongs to the RimM family. Binds ribosomal protein uS19.

The protein resides in the cytoplasm. Functionally, an accessory protein needed during the final step in the assembly of 30S ribosomal subunit, possibly for assembly of the head region. Essential for efficient processing of 16S rRNA. May be needed both before and after RbfA during the maturation of 16S rRNA. It has affinity for free ribosomal 30S subunits but not for 70S ribosomes. The chain is Ribosome maturation factor RimM from Rhizobium meliloti (strain 1021) (Ensifer meliloti).